We begin with the raw amino-acid sequence, 156 residues long: ATP synthase subunit b (156 aa).

Residues 7 to 29 form a helical membrane-spanning segment; that stretch reads LFAQMVVFLVLAWFTMKFVWPPL.

This sequence belongs to the ATPase B chain family. As to quaternary structure, F-type ATPases have 2 components, F(1) - the catalytic core - and F(0) - the membrane proton channel. F(1) has five subunits: alpha(3), beta(3), gamma(1), delta(1), epsilon(1). F(0) has three main subunits: a(1), b(2) and c(10-14). The alpha and beta chains form an alternating ring which encloses part of the gamma chain. F(1) is attached to F(0) by a central stalk formed by the gamma and epsilon chains, while a peripheral stalk is formed by the delta and b chains.

The protein localises to the cell inner membrane. Functionally, f(1)F(0) ATP synthase produces ATP from ADP in the presence of a proton or sodium gradient. F-type ATPases consist of two structural domains, F(1) containing the extramembraneous catalytic core and F(0) containing the membrane proton channel, linked together by a central stalk and a peripheral stalk. During catalysis, ATP synthesis in the catalytic domain of F(1) is coupled via a rotary mechanism of the central stalk subunits to proton translocation. Component of the F(0) channel, it forms part of the peripheral stalk, linking F(1) to F(0). This is ATP synthase subunit b from Burkholderia multivorans (strain ATCC 17616 / 249).